The chain runs to 461 residues: BSD domain-containing protein 1 (461 aa).

Phosphoserine is present on residues Ser123 and Ser197. Positions 177–229 (WLSQFCLEEKKGEISELLVGSPSIRALYTKMVPAAVSHSEFWHRYFYKVHQLE) constitute a BSD domain. The segment at 239-384 (KQRAEQSISE…SGPEPRPPAR (146 aa)) is disordered. Positions 250 to 259 (PGWEEEEEEL) are enriched in acidic residues. Positions 295-318 (LVTPVEPPTEVTPSESSESVSLVT) are enriched in low complexity. Thr387 carries the phosphothreonine modification. The interval 398-430 (VFELNSDSGKSTPSNNGKKGSSTDISEDWEKDF) is disordered. The span at 402–421 (NSDSGKSTPSNNGKKGSSTD) shows a compositional bias: polar residues. Residues Ser418, Ser419, and Ser449 each carry the phosphoserine modification.

The protein is BSD domain-containing protein 1 (BSDC1) of Bos taurus (Bovine).